A 339-amino-acid chain; its full sequence is MamK-like protein (339 aa).

Residues Y18–S19, D74, A162–T164, and K216–A220 each bind ATP.

Belongs to the FtsA/MreB family. MamK subfamily. Forms cytoplasmic filament polymers. Forms filaments with MamK.

It is found in the cytoplasm. It localises to the cytoskeleton. The catalysed reaction is ATP + H2O = ADP + phosphate + H(+). Protein with ATPase activity which forms pole-to-pole filaments in vivo, probably with MamK. Efficient filament formation requires MamK. Probably promotes turnover of MamK filaments, by providing a monomer pool. In vivo, in the absence of its paralog MamK, forms thin filaments from pole to pole. In vitro forms straight filaments and bundles in the absence of ATP. Filament formation is triggered by KCl and MgCl(2); polymerizes more slowly and makes thinner filaments than MamK. Expression in E.coli yields a filament in the cell's longitudinal axis; the protein nucleates at one pole or the cell septum. The sequence is that of MamK-like protein from Paramagnetospirillum magneticum (strain ATCC 700264 / AMB-1) (Magnetospirillum magneticum).